Consider the following 644-residue polypeptide: Large subunit GTPase 1 homolog (644 aa).

The segment at 1-31 (MGRRRAPGGGSLGRVLIRQQTQRSRSHRHTD) is disordered. A phosphoserine mark is found at S93 and S97. In terms of domain architecture, CP-type G spans 164 to 430 (WRQLWRVIER…LCDCPGLVMP (267 aa)). 212–215 (NKAD) serves as a coordination point for GTP. The segment at 253 to 345 (KEEVDSVAGD…KNAENQQVNN (93 aa)) is disordered. Positions 302-326 (CQEDEEEDWQTCSEEDSVPEEEEGC) are enriched in acidic residues. GTP contacts are provided by residues 379–386 (GYPNVGKS) and 423–426 (DCPG). The segment at 618–644 (VPGKPWKKHGNRNKKEKSRRLYKHLDV) is disordered. The span at 622-644 (PWKKHGNRNKKEKSRRLYKHLDV) shows a compositional bias: basic residues.

It belongs to the TRAFAC class YlqF/YawG GTPase family. LSG1 subfamily.

Its subcellular location is the cytoplasm. It localises to the endoplasmic reticulum. The protein resides in the nucleus. The protein localises to the cajal body. It catalyses the reaction GTP + H2O = GDP + phosphate + H(+). Its function is as follows. Functions as a GTPase. May act by mediating the release of NMD3 from the 60S ribosomal subunit after export into the cytoplasm during the 60S ribosomal subunit maturation. The polypeptide is Large subunit GTPase 1 homolog (Mus musculus (Mouse)).